A 502-amino-acid polypeptide reads, in one-letter code: Lipoyl synthase, apicoplast (502 aa).

Residues 1–16 form the signal peptide; that stretch reads MNFLVLFFSYSIFVLP. Positions 192, 197, 203, 218, 222, 225, and 433 each coordinate [4Fe-4S] cluster. A Radical SAM core domain is found at 204–422; the sequence is WNIGTATIML…KDVGLKMGFK (219 aa).

Belongs to the radical SAM superfamily. Lipoyl synthase family. [4Fe-4S] cluster is required as a cofactor.

The protein localises to the plastid. It localises to the apicoplast. The enzyme catalyses [[Fe-S] cluster scaffold protein carrying a second [4Fe-4S](2+) cluster] + N(6)-octanoyl-L-lysyl-[protein] + 2 oxidized [2Fe-2S]-[ferredoxin] + 2 S-adenosyl-L-methionine + 4 H(+) = [[Fe-S] cluster scaffold protein] + N(6)-[(R)-dihydrolipoyl]-L-lysyl-[protein] + 4 Fe(3+) + 2 hydrogen sulfide + 2 5'-deoxyadenosine + 2 L-methionine + 2 reduced [2Fe-2S]-[ferredoxin]. It participates in protein modification; protein lipoylation via endogenous pathway; protein N(6)-(lipoyl)lysine from octanoyl-[acyl-carrier-protein]: step 2/2. Its function is as follows. Catalyzes the radical-mediated insertion of two sulfur atoms into the C-6 and C-8 positions of the octanoyl moiety bound to the lipoyl domains of lipoate-dependent enzymes, thereby converting the octanoylated domains into lipoylated derivatives. This Plasmodium yoelii yoelii protein is Lipoyl synthase, apicoplast.